A 167-amino-acid polypeptide reads, in one-letter code: Large ribosomal subunit protein bL9 (167 aa).

Belongs to the bacterial ribosomal protein bL9 family.

Functionally, binds to the 23S rRNA. This is Large ribosomal subunit protein bL9 from Chlamydia muridarum (strain MoPn / Nigg).